The following is a 311-amino-acid chain: MDKDWFEVSVITSSEAVEAVTGILYNTPVKGVAIEDSKDVEFKKKHPGDWDYFDESLLNVKDGAVIKAYYKDDHNFDESVKYIEESIDKLSEFGINKGEGKVFVNKVNETDWENNWKKYYKPTKIGARIVVKPLWEEYTPKDYELMLNMDPGMAFGTGTHETTRMCIQALERYVNEDAEVFDIGTGSGILAIAAAKLNAKKVLGVDLDSVAVKAAKENIQYNNVNNIEILHGNLMEVVQGKADIIVANIIADVINILIPDINKFLKTDGYFISSGIIKDRAEDVIENLKKNKFEIIEVNNQGEWICIVAKL.

Positions 163, 184, 206, and 248 each coordinate S-adenosyl-L-methionine.

Belongs to the methyltransferase superfamily. PrmA family.

The protein resides in the cytoplasm. It catalyses the reaction L-lysyl-[protein] + 3 S-adenosyl-L-methionine = N(6),N(6),N(6)-trimethyl-L-lysyl-[protein] + 3 S-adenosyl-L-homocysteine + 3 H(+). Functionally, methylates ribosomal protein L11. This is Ribosomal protein L11 methyltransferase from Clostridium acetobutylicum (strain ATCC 824 / DSM 792 / JCM 1419 / IAM 19013 / LMG 5710 / NBRC 13948 / NRRL B-527 / VKM B-1787 / 2291 / W).